We begin with the raw amino-acid sequence, 237 residues long: Class B acid phosphatase (237 aa).

The N-terminal stretch at 1 to 23 (MKKITLALSAVCLLFTLNHSANA) is a signal peptide. The Nucleophile role is filled by Asp-69. Residues Asp-69 and Asp-71 each contribute to the Mg(2+) site. Asp-71 serves as the catalytic Proton donor. Substrate contacts are provided by residues 137–138 (TG) and Lys-177. Residue Asp-192 coordinates Mg(2+).

This sequence belongs to the class B bacterial acid phosphatase family. In terms of assembly, homotetramer. Mg(2+) serves as cofactor.

Its subcellular location is the periplasm. It catalyses the reaction a phosphate monoester + H2O = an alcohol + phosphate. In terms of biological role, dephosphorylates several organic phosphate monoesters including monophosphate nucleotides (NMPs), coenzyme A (CoA), nicotinamide adenine dinucleotide phosphate (NADP), flavin mononucleotide (FMN) and phosphorylated 5-6 carbon sugars in vitro. Also has a phosphotransferase activity catalyzing the transfer of low-energy phosphate groups from organic phosphate monoesters to free hydroxyl groups of various organic compounds. The chain is Class B acid phosphatase (aphA) from Salmonella typhi.